The chain runs to 1126 residues: Probable serine/threonine-protein kinase DDB_G0280111 (1126 aa).

In terms of domain architecture, Protein kinase spans 16–295 (LNFVKQIAEG…NLLRNQQPLF (280 aa)). Residues 22–30 (IAEGGFSYV) and Lys-45 contribute to the ATP site. The Proton acceptor role is filled by Asp-147. Low complexity predominate over residues 314–333 (NNNNNINNNNNNNIVNGKNI). Disordered regions lie at residues 314–469 (NNNN…NGNN), 760–901 (LNLN…QQQQ), 944–1072 (TPSS…DEVR), and 1095–1126 (NKQS…GLLN). Over residues 347 to 364 (TPTPPPPAPSQSPSPSPS) the composition is skewed to pro residues. Residues 367-390 (VVNNIENNSNGLEHSNSNGNISQP) show a composition bias toward polar residues. Composition is skewed to low complexity over residues 413–422 (PPNNSNNSFD), 432–469 (NLSN…NGNN), and 760–795 (LNLN…LNSS). Composition is skewed to polar residues over residues 796–825 (FDNI…SESG) and 833–845 (EPTS…YQQS). Over residues 846–856 (NNNNNNNNNNN) the composition is skewed to low complexity. The segment covering 857–866 (GTPISLTPGS) has biased composition (polar residues). 3 stretches are compositionally biased toward low complexity: residues 886 to 901 (QQQQ…QQQQ), 953 to 971 (PSTG…QQSQ), and 1003 to 1035 (NVNI…NPNL). The span at 1095-1105 (NKQSRMNNPNN) shows a compositional bias: polar residues. Positions 1108 to 1126 (DEGDSGFGDGEEEDEGLLN) are enriched in acidic residues.

Belongs to the protein kinase superfamily. Ser/Thr protein kinase family.

The catalysed reaction is L-seryl-[protein] + ATP = O-phospho-L-seryl-[protein] + ADP + H(+). The enzyme catalyses L-threonyl-[protein] + ATP = O-phospho-L-threonyl-[protein] + ADP + H(+). The sequence is that of Probable serine/threonine-protein kinase DDB_G0280111 from Dictyostelium discoideum (Social amoeba).